Reading from the N-terminus, the 336-residue chain is MVYIMGFEGSANKLGIGIVKDDGTILSNIRHTFITPPGEGFLPKDTAKHHRSFILSLVEKSLEESKLKPSDIDCLAYTKGPGMGPPLRSVAVTVRMLSQLWDRPIVAVNHCIAHIEMGRLITGAVDPTILYVSGGNTQVISYSLKKYRIFGETIDIAVGNCLDRFARVIQIPNDPSPGYNIEQLAKKGKNLIELPYITKGMDVSFSGILSSIEGMVKNKQNKTQHSVEDLCYSLQEHLFSMLVETAERALAHCGQNEVLAVGGVGCNQRLQEMIQQMISQRNGKSFAIDERYCIDNGAMIAWAGYLIFKNGTTTPLSQTTTTQRFRTDQVDVTWRD.

A divalent metal cation contacts are provided by His-110, His-114, and Tyr-131. Residues 131-135 (YVSGG), Asp-163, Gly-178, Glu-182, and Asn-267 each bind substrate. Asp-295 serves as a coordination point for a divalent metal cation.

Belongs to the KAE1 / TsaD family. In terms of assembly, component of the EKC/KEOPS complex; the whole complex dimerizes. A divalent metal cation serves as cofactor.

It localises to the cytoplasm. Its subcellular location is the nucleus. It catalyses the reaction L-threonylcarbamoyladenylate + adenosine(37) in tRNA = N(6)-L-threonylcarbamoyladenosine(37) in tRNA + AMP + H(+). In terms of biological role, component of the EKC/KEOPS complex that is required for the formation of a threonylcarbamoyl group on adenosine at position 37 (t(6)A37) in tRNAs that read codons beginning with adenine. The complex is probably involved in the transfer of the threonylcarbamoyl moiety of threonylcarbamoyl-AMP (TC-AMP) to the N6 group of A37. Osgep likely plays a direct catalytic role in this reaction, but requires other protein(s) of the complex to fulfill this activity. This chain is Probable tRNA N6-adenosine threonylcarbamoyltransferase, found in Dictyostelium discoideum (Social amoeba).